The primary structure comprises 144 residues: Large ribosomal subunit protein uL15 (144 aa).

Residues 24–52 (GSGLGKTAGRGHKGLKSRSGGSVRPGFEG) form a disordered region.

The protein belongs to the universal ribosomal protein uL15 family. Part of the 50S ribosomal subunit.

Binds to the 23S rRNA. The protein is Large ribosomal subunit protein uL15 of Cellvibrio japonicus (strain Ueda107) (Pseudomonas fluorescens subsp. cellulosa).